A 1184-amino-acid polypeptide reads, in one-letter code: DNA-directed RNA polymerase subunit beta (1184 aa).

The interval 1160 to 1184 is disordered; it reads DDDFTNQNDAFNIVQPENAAAEKTE.

This sequence belongs to the RNA polymerase beta chain family. As to quaternary structure, the RNAP catalytic core consists of 2 alpha, 1 beta, 1 beta' and 1 omega subunit. When a sigma factor is associated with the core the holoenzyme is formed, which can initiate transcription.

The catalysed reaction is RNA(n) + a ribonucleoside 5'-triphosphate = RNA(n+1) + diphosphate. DNA-dependent RNA polymerase catalyzes the transcription of DNA into RNA using the four ribonucleoside triphosphates as substrates. The chain is DNA-directed RNA polymerase subunit beta from Listeria welshimeri serovar 6b (strain ATCC 35897 / DSM 20650 / CCUG 15529 / CIP 8149 / NCTC 11857 / SLCC 5334 / V8).